Here is a 367-residue protein sequence, read N- to C-terminus: Alanine racemase (367 aa).

Lys40 serves as the catalytic Proton acceptor; specific for D-alanine. The residue at position 40 (Lys40) is an N6-(pyridoxal phosphate)lysine. Position 136 (Arg136) interacts with substrate. Tyr263 serves as the catalytic Proton acceptor; specific for L-alanine. Met310 provides a ligand contact to substrate.

It belongs to the alanine racemase family. Requires pyridoxal 5'-phosphate as cofactor.

It carries out the reaction L-alanine = D-alanine. It functions in the pathway amino-acid biosynthesis; D-alanine biosynthesis; D-alanine from L-alanine: step 1/1. In terms of biological role, catalyzes the interconversion of L-alanine and D-alanine. May also act on other amino acids. The protein is Alanine racemase (alr) of Lactococcus lactis subsp. cremoris (strain SK11).